The sequence spans 349 residues: MQPFTEFCTLTKAITSASNDFFINQTRLTCDICKELVSFDCEDKVVASLAAVRSDIPIEVTERKDLNLLDLIQFFEKKIEFTTLIDELFTAHKDHCQKNGKPCTMLSIIAGRYTDELYREESIEENRSWVLKAYKLDLINQQFFRNNRLYDILKEAGVENLERIMLEDEIESVCKTKAKSPEEVITKMIPEQLTKLLELMSCPQKQVTVYIRGSGYTPVNHAKLNACLKDRDIQLYLGMPMSYFRYSSWESYYEGNGMCLKSEHELKHNVAKVYAAVKKVAPKVKLLAWTLEANDEMRTCSCMVKQHDMAIAAIRGELYVPPELRPVPVRLGKRRASSGDVSDIPMKRN.

This is an uncharacterized protein from Ostreid herpesvirus 1 (isolate France) (OsHV-1).